Reading from the N-terminus, the 54-residue chain is 2-aminomuconate deaminase (54 aa).

Homohexamer.

The enzyme catalyses (2Z,4E)-2-aminomuconate + H2O = (3E)-2-oxohex-3-enedioate + NH4(+). Its pathway is xenobiotic degradation; nitrobenzene degradation. Converts 2-aminomuconate to 4-oxalocrotonate, an intermediate step in the biodegradation of nitrobenzene. The chain is 2-aminomuconate deaminase from Ectopseudomonas oleovorans (Pseudomonas oleovorans).